Reading from the N-terminus, the 316-residue chain is 4-diphosphocytidyl-2-C-methyl-D-erythritol kinase (316 aa).

The active site involves K23. Residue 108–118 participates in ATP binding; sequence PVAGGMAGGSA. D150 is an active-site residue.

The protein belongs to the GHMP kinase family. IspE subfamily.

The enzyme catalyses 4-CDP-2-C-methyl-D-erythritol + ATP = 4-CDP-2-C-methyl-D-erythritol 2-phosphate + ADP + H(+). It participates in isoprenoid biosynthesis; isopentenyl diphosphate biosynthesis via DXP pathway; isopentenyl diphosphate from 1-deoxy-D-xylulose 5-phosphate: step 3/6. Functionally, catalyzes the phosphorylation of the position 2 hydroxy group of 4-diphosphocytidyl-2C-methyl-D-erythritol. In Mycobacterium avium (strain 104), this protein is 4-diphosphocytidyl-2-C-methyl-D-erythritol kinase.